Here is a 744-residue protein sequence, read N- to C-terminus: Dolasta-1(15),8-diene synthase (744 aa).

The tract at residues 1–344 is terpene cyclase; it reads MASTMMNYQD…RRYNPAAPLP (344 aa). Mg(2+)-binding residues include Asp-108 and Asp-112. Substrate is bound by residues Asp-108, Asp-112, 198-201, 246-250, and 336-337; these read RHYD, SWDKE, and RY. Residues 108–112 carry the DDXXD motif; it reads DDLTD. Positions 345 to 744 are prenyltransferase; sequence RREDIGKVNG…LHLITFQLKV (400 aa). Residues 399–422 form a disordered region; the sequence is YTTMTPAETSSDDKKKKAKASHET. The segment covering 409–422 has biased composition (basic and acidic residues); sequence SDDKKKKAKASHET. Isopentenyl diphosphate contacts are provided by Arg-459 and His-488. Residues Asp-495 and Asp-499 each coordinate Mg(2+). A DDXXD motif is present at residues 495 to 499; it reads DDVQD. Arg-504 lines the dimethylallyl diphosphate pocket. Residue Arg-505 participates in isopentenyl diphosphate binding. Dimethylallyl diphosphate is bound by residues Lys-581, Thr-582, and Gln-617.

This sequence in the N-terminal section; belongs to the terpene synthase family. In the C-terminal section; belongs to the FPP/GGPP synthase family. In terms of assembly, hexamer. Mg(2+) is required as a cofactor.

It catalyses the reaction isopentenyl diphosphate + (2E,6E)-farnesyl diphosphate = (2E,6E,10E)-geranylgeranyl diphosphate + diphosphate. The catalysed reaction is (2E,6E,10E)-geranylgeranyl diphosphate = (5R,12R,14S)-dolasta-1(15),8-diene + diphosphate. The enzyme catalyses (2E,6E,10E)-geranylgeranyl diphosphate = delta-araneosene + diphosphate. In terms of biological role, bifunctional terpene synthase involved in the biosynthesis of the diterpenes delta-araneosene and dolasta-1(15),8-diene. The C-terminal prenyltransferase domain of CgDS catalyzes formation of the universal precursor of diterpene, geranylgeranyl diphosphate (GGPP), whereas the N-terminal terpene cyclase domain catalyzes the cyclization of GGPP to the intermediate delta-araneosene that is further converted to dolasta-1(15),8-diene in a second cyclization event. In some cases the cyclization stops at the delta-araneosene stage. This Colletotrichum gloeosporioides (Anthracnose fungus) protein is Dolasta-1(15),8-diene synthase.